A 565-amino-acid polypeptide reads, in one-letter code: Salicyl-AMP ligase / salicyl-S-ArCP synthetase (565 aa).

6 residues coordinate ATP: G214, G330, V352, D436, R451, and K542.

The protein belongs to the ATP-dependent AMP-binding enzyme family.

It catalyses the reaction salicylate + ATP + H(+) = 2-hydroxybenzoyl-5'-AMP + diphosphate. It carries out the reaction 2-hydroxybenzoyl-5'-AMP + holo-[ACP] = salicyl-[ACP] + AMP + H(+). It participates in siderophore biosynthesis; mycobactin biosynthesis. Its activity is regulated as follows. Inhibited by salicyl-AMS, an acyl-AMP analog. Also inhibited by 5'-O-[(N-acyl)sulfamoyl]adenosines. Involved in the initial steps of the mycobactin biosynthetic pathway. Catalyzes the salicylation of the aryl carrier protein (ArCP) domain of MbtB through a two-step reaction. The first step is the ATP-dependent adenylation of salicylate to generate a salicyl-AMP intermediate. The second step is the transfer of this activated salicylate to MbtB to form a salicyl-ArCP domain thioester. The sequence is that of Salicyl-AMP ligase / salicyl-S-ArCP synthetase from Mycobacterium tuberculosis (strain ATCC 25618 / H37Rv).